We begin with the raw amino-acid sequence, 242 residues long: Probable transcriptional regulatory protein LBA0733 (242 aa).

The interval 1–22 (MSGHSKWHNIQGRKNAQDAKRG) is disordered.

It belongs to the TACO1 family.

It localises to the cytoplasm. This chain is Probable transcriptional regulatory protein LBA0733, found in Lactobacillus acidophilus (strain ATCC 700396 / NCK56 / N2 / NCFM).